Here is a 396-residue protein sequence, read N- to C-terminus: NADH-quinone oxidoreductase subunit D (396 aa).

Belongs to the complex I 49 kDa subunit family. In terms of assembly, NDH-1 is composed of 14 different subunits. Subunits NuoB, C, D, E, F, and G constitute the peripheral sector of the complex.

The protein resides in the cell inner membrane. It carries out the reaction a quinone + NADH + 5 H(+)(in) = a quinol + NAD(+) + 4 H(+)(out). Functionally, NDH-1 shuttles electrons from NADH, via FMN and iron-sulfur (Fe-S) centers, to quinones in the respiratory chain. The immediate electron acceptor for the enzyme in this species is believed to be ubiquinone. Couples the redox reaction to proton translocation (for every two electrons transferred, four hydrogen ions are translocated across the cytoplasmic membrane), and thus conserves the redox energy in a proton gradient. The protein is NADH-quinone oxidoreductase subunit D of Brucella abortus (strain S19).